Reading from the N-terminus, the 501-residue chain is Spore development regulator VOSA (501 aa).

Disordered regions lie at residues 26-55 (GQFGDPNLTPPQAETQMSAQASAQAVGQEP), 67-88 (PQRARVAQGKEKGTDRKPIDPP), and 228-274 (AMTT…DTRG). Residues 35-50 (PPQAETQMSAQASAQA) are compositionally biased toward polar residues. The region spanning 52-223 (GQEPEPDYKL…SDQGVRLRVR (172 aa)) is the Velvet domain. Composition is skewed to basic and acidic residues over residues 67–85 (PQRARVAQGKEKGTDRKPI) and 237–252 (QHAEVAKKHSEWDRKQ). The span at 253–271 (TSAVSRHSSINENDSTPTD) shows a compositional bias: polar residues. Residues 364–371 (MSSHHGYT) carry the Nuclear localization signal motif. 2 disordered regions span residues 378–455 (FAPH…QQTP) and 474–501 (PGQLVGTSAPSPHLGQGYRHGMINEPGA).

This sequence belongs to the velvet family. VosA subfamily. Forms a heterodimeric complex with VELB; the formation of the VELB-VOSA complex is light-dependent.

The protein localises to the nucleus. Component of the VELB-VOSA heterodimeric complex that plays a dual role in activating genes associated with spore maturation and repressing certain development-associated genes. The complex binds DNA through the DNA-binding domain of VOSA that recognizes an 11-nucleotide consensus sequence 5'-CTGGCCGCGGC-3' consisting of two motifs in the promoters of key developmental regulatory genes. Appears dispensable for the development and pathogenicity. This is Spore development regulator VOSA from Pyricularia oryzae (strain 70-15 / ATCC MYA-4617 / FGSC 8958) (Rice blast fungus).